The sequence spans 329 residues: Olfactory receptor 52L1 (329 aa).

Residues 1–43 are Extracellular-facing; the sequence is MTLVSFFSFLSKPLIMLLSNSSWRLSQPSFLLVGIPGLEESQH. Residue N20 is glycosylated (N-linked (GlcNAc...) asparagine). A helical transmembrane segment spans residues 44–64; sequence WIALPLGILYLLALVGNVTIL. Residues 65-72 lie on the Cytoplasmic side of the membrane; that stretch reads FIIWMDPS. Residues 73-93 form a helical membrane-spanning segment; it reads LHQSMYLFLSMLAAIDLVLAS. At 94–117 the chain is on the extracellular side; the sequence is STAPKALAVLLVHAHEIGYIVCLI. An intrachain disulfide couples C115 to C207. Residues 118–138 traverse the membrane as a helical segment; it reads QMFFIHAFSSMESGVLVAMAL. Topologically, residues 139 to 157 are cytoplasmic; the sequence is DRYVAICHPLHHSTILHPG. Residues 158–178 traverse the membrane as a helical segment; it reads VIGRIGMVVLVRGLLLLIPFP. The Extracellular portion of the chain corresponds to 179 to 214; sequence ILLGTLIFCQATIIGHAYCEHMAVVKLACSETTVNR. The helical transmembrane segment at 215–235 threads the bilayer; it reads AYGLTMALLVIGLDVLAIGVS. The Cytoplasmic portion of the chain corresponds to 236 to 255; sequence YAHILQAVLKVPGSEARLKA. Residues 256–276 form a helical membrane-spanning segment; sequence FSTCGSHICVILVFYVPGIFS. Topologically, residues 277–291 are extracellular; that stretch reads FLTHRFGHHVPHHVH. A helical membrane pass occupies residues 292 to 312; that stretch reads VLLATRYLLMPPALNPLVYGV. Residues 313 to 329 lie on the Cytoplasmic side of the membrane; it reads KTQQIRQRVLRVFTQKD.

It belongs to the G-protein coupled receptor 1 family.

It is found in the cell membrane. Odorant receptor. The chain is Olfactory receptor 52L1 (OR52L1) from Homo sapiens (Human).